Consider the following 95-residue polypeptide: Class II hydrophobin 3 (95 aa).

The signal sequence occupies residues 1-16; it reads MKLLAVAALLAGAAIA. Intrachain disulfides connect C28–C77, C38–C68, C39–C51, and C78–C89.

Belongs to the cerato-ulmin hydrophobin family.

It is found in the secreted. Its subcellular location is the cell wall. Functionally, aerial growth, conidiation, and dispersal of filamentous fungi in the environment rely upon a capability of their secreting small amphipathic proteins called hydrophobins (HPBs) with low sequence identity. Class I can self-assemble into an outermost layer of rodlet bundles on aerial cell surfaces, conferring cellular hydrophobicity that supports fungal growth, development and dispersal; whereas Class II form highly ordered films at water-air interfaces through intermolecular interactions but contribute nothing to the rodlet structure. Hyd3 plays a neglectable role in hyphal growth and asexual development and does not seem involved in cellular hydrophobicity, conidial adhesion, stress tolerance nor insect pathogenicity. The protein is Class II hydrophobin 3 of Metarhizium robertsii (strain ARSEF 23 / ATCC MYA-3075) (Metarhizium anisopliae (strain ARSEF 23)).